We begin with the raw amino-acid sequence, 463 residues long: Cytochrome c-552 (463 aa).

An N-terminal signal peptide occupies residues 1–23 (MNVKSIALSAVIATSFLAAGAMA). Position 83 (histidine 83) interacts with heme c. Heme is bound by residues cysteine 111, cysteine 114, and lysine 115. Heme c contacts are provided by cysteine 149, cysteine 152, histidine 153, cysteine 191, cysteine 194, and histidine 195. Positions 197, 198, 246, and 248 each coordinate Ca(2+). Tyrosine 198 contributes to the substrate binding site. Position 249 (histidine 249) interacts with substrate. Histidine 260, cysteine 267, cysteine 270, histidine 271, histidine 286, cysteine 299, cysteine 302, histidine 303, and histidine 378 together coordinate heme c.

It belongs to the cytochrome c-552 family. Requires Ca(2+) as cofactor. Heme c is required as a cofactor.

The protein resides in the periplasm. The enzyme catalyses 6 Fe(III)-[cytochrome c] + NH4(+) + 2 H2O = 6 Fe(II)-[cytochrome c] + nitrite + 8 H(+). The protein operates within nitrogen metabolism; nitrate reduction (assimilation). Catalyzes the reduction of nitrite to ammonia, consuming six electrons in the process. The polypeptide is Cytochrome c-552 (Shewanella frigidimarina (strain NCIMB 400)).